The following is a 207-amino-acid chain: Ribosomal RNA large subunit methyltransferase E (207 aa).

Residues Gly60, Trp62, Asp80, Asp96, and Asp121 each contribute to the S-adenosyl-L-methionine site. The active-site Proton acceptor is the Lys161.

It belongs to the class I-like SAM-binding methyltransferase superfamily. RNA methyltransferase RlmE family.

The protein resides in the cytoplasm. The catalysed reaction is uridine(2552) in 23S rRNA + S-adenosyl-L-methionine = 2'-O-methyluridine(2552) in 23S rRNA + S-adenosyl-L-homocysteine + H(+). Its function is as follows. Specifically methylates the uridine in position 2552 of 23S rRNA at the 2'-O position of the ribose in the fully assembled 50S ribosomal subunit. The polypeptide is Ribosomal RNA large subunit methyltransferase E (Marinobacter nauticus (strain ATCC 700491 / DSM 11845 / VT8) (Marinobacter aquaeolei)).